The chain runs to 282 residues: NFU1 iron-sulfur cluster scaffold homolog, mitochondrial (282 aa).

A mitochondrion-targeting transit peptide spans 1-27; it reads MSKLLSYTARIILRNSRITVRQLVRGF. Residues 178 to 246 form a nifU region; the sequence is IKELLDTRIR…IPEVESVEQV (69 aa). Cysteine 215 and cysteine 218 together coordinate [4Fe-4S] cluster. Positions 263–282 are disordered; that stretch reads KNLKQKEPAGAPVGIGGGPN.

It belongs to the NifU family.

The protein localises to the mitochondrion. In terms of biological role, molecular scaffold for [Fe-S] cluster assembly of mitochondrial iron-sulfur proteins. This chain is NFU1 iron-sulfur cluster scaffold homolog, mitochondrial, found in Drosophila persimilis (Fruit fly).